The primary structure comprises 1285 residues: Protein crumbs homolog 2 (1285 aa).

An N-terminal signal peptide occupies residues 1-28 (MALARPGTPDPQALASVLLLLLWAPALS). The segment at 1 to 350 (MALARPGTPD…GFQCHCPDGY (350 aa)) is required for maximum inhibition of APP amyloid-beta peptide secretion. Residues 67-106 (EPRGCATQPCHHGALCVPQGPDPTGFRCYCVPGFQGPRCE) enclose the EGF-like 1 domain. 27 disulfides stabilise this stretch: Cys71/Cys82, Cys76/Cys94, Cys96/Cys105, Cys112/Cys123, Cys117/Cys132, Cys134/Cys143, Cys150/Cys161, Cys155/Cys170, Cys172/Cys181, Cys188/Cys199, Cys193/Cys208, Cys210/Cys220, Cys227/Cys238, Cys232/Cys247, Cys249/Cys258, Cys265/Cys276, Cys270/Cys306, Cys308/Cys317, Cys324/Cys335, Cys329/Cys344, Cys346/Cys355, Cys362/Cys373, Cys367/Cys382, Cys384/Cys393, Cys400/Cys411, Cys405/Cys424, and Cys426/Cys435. The EGF-like 2; calcium-binding domain occupies 108–144 (DIDECASRPCHHGATCRNLADRYECHCPLGYAGVTCE). The EGF-like 3; calcium-binding domain maps to 146 to 182 (EVDECASAPCLHGGSCLDGVGSFRCVCAPGYGGTRCQ). An EGF-like 4; calcium-binding domain is found at 184–221 (DLDECQSQPCAHGGTCHDLVNGFRCDCAGTGYEGTHCE). 2 consecutive EGF-like domains span residues 223–259 (EVLECASAPCEHNASCLEGLGSFRCLCWPGYSGELCE) and 261–318 (DEDE…ADCG). The N-linked (GlcNAc...) asparagine glycan is linked to Asn235. Ser267 is a glycosylation site (O-linked (Glc...) serine). Positions 320 to 356 (EVDECASRPCLNGGHCQDLPNGFQCHCPDGYAGPTCE) constitute an EGF-like 7; calcium-binding domain. The region spanning 358–394 (DVDECLSDPCLHGGTCSDTVAGYICRCPETWGGRDCS) is the EGF-like 8; calcium-binding domain. Positions 396-436 (QLTGCQGHTCPLAATCIPIFESGVHSYVCHCPPGTHGPFCG) constitute an EGF-like 9 domain. The region spanning 431–603 (HGPFCGQNTT…DLGENVLLGC (173 aa)) is the Laminin G-like 1 domain. Residues Asn438 and Asn478 are each glycosylated (N-linked (GlcNAc...) asparagine). 4 disulfide bridges follow: Cys579–Cys603, Cys609–Cys620, Cys614–Cys629, and Cys631–Cys640. Residues 605–641 (RREQCRPLPCVHGGSCVDLWTHFRCDCARPHRGPTCA) enclose the EGF-like 10 domain. The Laminin G-like 2 domain occupies 647–805 (ATFGLGGAPS…RQSWNLTAGC (159 aa)). Residues Asn669, Asn690, Asn786, and Asn800 are each glycosylated (N-linked (GlcNAc...) asparagine). Disulfide bonds link Cys766-Cys805, Cys811-Cys822, Cys816-Cys831, and Cys833-Cys842. The 37-residue stretch at 807-843 (SEDMCSPDPCFNGGTCLVTWNDFHCTCPANFTGPTCA) folds into the EGF-like 11 domain. 4 N-linked (GlcNAc...) asparagine glycosylation sites follow: Asn836, Asn886, Asn926, and Asn1009. The Laminin G-like 3 domain occupies 871 to 1054 (EATFREGPPA…PGTPAPILGC (184 aa)). 13 disulfide bridges follow: Cys1013–Cys1054, Cys1060–Cys1071, Cys1065–Cys1080, Cys1082–Cys1091, Cys1098–Cys1108, Cys1103–Cys1118, Cys1120–Cys1129, Cys1138–Cys1150, Cys1144–Cys1159, Cys1161–Cys1170, Cys1177–Cys1188, Cys1182–Cys1197, and Cys1199–Cys1208. EGF-like domains follow at residues 1056–1092 (GAPVCAPSPCLHDGACRDLFDAFACACGPGWEGPRCE), 1094–1130 (HVDPCHSAPCARGRCHTHPDGRFECRCPPGFGGPRCR), 1134–1171 (PSKECSLNVTCLDGSPCEGGSPAANCSCLEGLAGQRCQ), and 1173–1209 (PTLPCEANPCLNGGTCRAAGGVSECICNARFSGQFCE). N-linked (GlcNAc...) asparagine glycans are attached at residues Asn1141 and Asn1158. A helical membrane pass occupies residues 1225-1245 (VAVPAACACLLLLLLGLLSGI). Residues 1249-1285 (RKRRQSEGTYSPSQQEVAGARLEMDSVLKVPPEERLI) are interaction with EPB41L5.

The protein belongs to the Crumbs protein family. As to quaternary structure, associates with the gamma-secretase complex via interaction (via the transmembrane domain) with PSEN1/PS1. Interacts (via intracellular domain) with EPB41L5. Interacts with PALS1. O-glucosylated by POGLUT1 at Ser-267; consists of an O-glucose trisaccharide, in which the O-glucose is elongated by the addition of two xylose residues. O-glucosylation is required for localization at the plasma membrane. Post-translationally, N-glycosylated. In terms of tissue distribution, expressed in glomeruli, podocytes of the glomerular capillary loops, and parietal glomerular epithelial cells in the kidney (at protein level). Expressed in retina, fetal eye and brain. Also expressed in kidney, RPE/choroid, and at low levels in lung, placenta, and heart.

The protein localises to the apical cell membrane. Its subcellular location is the cytoplasm. It localises to the cell junction. The protein resides in the secreted. Its function is as follows. Apical polarity protein that plays a central role during the epithelial-to-mesenchymal transition (EMT) at gastrulation, when newly specified mesodermal cells move inside the embryo. Acts by promoting cell ingression, the process by which cells leave the epithelial epiblast and move inside the embryo to form a new tissue layer. The anisotropic distribution of CRB2 and MYH10/myosin-IIB at cell edges define which cells will ingress: cells with high apical CRB2 are probably extruded from the epiblast by neighboring cells with high levels of apical MYH10/myosin-IIB. Plays a role in the maintenance of retinal neuroepithelium organization, structural integrity, adhesion, photoreceptor polarity and retinal photoreceptor layer thickness. May play a role in determining the length of cone photoreceptor outer segments and proliferation of late-born progenitor cells. Also required for maintenance of the apical polarity complex during development of the cortex. Inhibits gamma-secretase-dependent cleavage of APP and secretion of amyloid-beta peptide 40 and amyloid-beta peptide 42, and thereby inhibits gamma-secretase-dependent Notch transcription. The sequence is that of Protein crumbs homolog 2 from Homo sapiens (Human).